The chain runs to 95 residues: Aspartyl/glutamyl-tRNA(Asn/Gln) amidotransferase subunit C (95 aa).

The protein belongs to the GatC family. In terms of assembly, heterotrimer of A, B and C subunits.

The catalysed reaction is L-glutamyl-tRNA(Gln) + L-glutamine + ATP + H2O = L-glutaminyl-tRNA(Gln) + L-glutamate + ADP + phosphate + H(+). It carries out the reaction L-aspartyl-tRNA(Asn) + L-glutamine + ATP + H2O = L-asparaginyl-tRNA(Asn) + L-glutamate + ADP + phosphate + 2 H(+). Functionally, allows the formation of correctly charged Asn-tRNA(Asn) or Gln-tRNA(Gln) through the transamidation of misacylated Asp-tRNA(Asn) or Glu-tRNA(Gln) in organisms which lack either or both of asparaginyl-tRNA or glutaminyl-tRNA synthetases. The reaction takes place in the presence of glutamine and ATP through an activated phospho-Asp-tRNA(Asn) or phospho-Glu-tRNA(Gln). The polypeptide is Aspartyl/glutamyl-tRNA(Asn/Gln) amidotransferase subunit C (Dehalococcoides mccartyi (strain ATCC BAA-2266 / KCTC 15142 / 195) (Dehalococcoides ethenogenes (strain 195))).